The primary structure comprises 193 residues: Peptidyl-tRNA hydrolase (193 aa).

Tyr16 provides a ligand contact to tRNA. Catalysis depends on His21, which acts as the Proton acceptor. Residues Phe66, Asn68, and Asn114 each coordinate tRNA.

It belongs to the PTH family. In terms of assembly, monomer.

Its subcellular location is the cytoplasm. It carries out the reaction an N-acyl-L-alpha-aminoacyl-tRNA + H2O = an N-acyl-L-amino acid + a tRNA + H(+). Hydrolyzes ribosome-free peptidyl-tRNAs (with 1 or more amino acids incorporated), which drop off the ribosome during protein synthesis, or as a result of ribosome stalling. Functionally, catalyzes the release of premature peptidyl moieties from peptidyl-tRNA molecules trapped in stalled 50S ribosomal subunits, and thus maintains levels of free tRNAs and 50S ribosomes. The protein is Peptidyl-tRNA hydrolase of Trichlorobacter lovleyi (strain ATCC BAA-1151 / DSM 17278 / SZ) (Geobacter lovleyi).